The primary structure comprises 384 residues: MDPTCQESPAEDSNNEEDLDSTKAAPRIRDTPEDIVLEAPASGLAFHPTRDLLAAGDVDGDVFVFAYSCQEGETKELWSSGHHLKSCRAVVFSEDGQKLVTVSKDKAIHVLDVEQGQLERRISKAHSAPINSLLLVDENVLVTGDDTGGIRLWDQRKEGPLMDMRQHEEYIADMALDPAKKLLLTASGDGCLGVFNIKRRRFELLSEPQSGDLTSVALMKYGKKVACGSSEGTIYLFNWNGFGATSDRFALRAESIDCMVPVTENLLCTGSTDGIIRAVNILPNRVVGTVGQHAGEPVEELALSHCGHFLASSGHDQRLKFWDMTQLRTVVVDDYRRRKKKGGPLRALSSKAWSTDDFFAGLREDEEEAKAPEEVSGESDDDSD.

Residues 1–33 are disordered; the sequence is MDPTCQESPAEDSNNEEDLDSTKAAPRIRDTPE. Residues 9 to 19 are compositionally biased toward acidic residues; it reads PAEDSNNEEDL. WD repeat units lie at residues 36 to 75, 82 to 121, 125 to 163, 166 to 205, 208 to 247, 250 to 289, and 293 to 332; these read VLEAPASGLAFHPTRDLLAAGDVDGDVFVFAYSCQEGETK, HHLKSCRAVVFSEDGQKLVTVSKDKAIHVLDVEQGQLERR, AHSAPINSLLLVDENVLVTGDDTGGIRLWDQRKEGPLMD, QHEEYIADMALDPAKKLLLTASGDGCLGVFNIKRRRFELL, PQSGDLTSVALMKYGKKVACGSSEGTIYLFNWNGFGATSD, ALRAESIDCMVPVTENLLCTGSTDGIIRAVNILPNRVVGT, and HAGEPVEELALSHCGHFLASSGHDQRLKFWDMTQLRTVVV. Serine 354 and serine 383 each carry phosphoserine. A disordered region spans residues 362–384; sequence LREDEEEAKAPEEVSGESDDDSD. A compositionally biased stretch (acidic residues) spans 375–384; that stretch reads VSGESDDDSD.

This sequence belongs to the WD repeat WDR55 family.

It is found in the nucleus. Its subcellular location is the nucleolus. The protein localises to the cytoplasm. Functionally, nucleolar protein that acts as a modulator of rRNA synthesis. Plays a central role during organogenesis. This is WD repeat-containing protein 55 (Wdr55) from Rattus norvegicus (Rat).